Reading from the N-terminus, the 311-residue chain is Olfactory receptor 2A5 (311 aa).

Residues 1–24 lie on the Extracellular side of the membrane; that stretch reads MTKNQTWVTEFILLGFPLSLRIQM. N-linked (GlcNAc...) asparagine glycosylation is present at N4. Residues 25–48 traverse the membrane as a helical segment; the sequence is LLSGLFSLLYVFTLLGNGAILGLI. Residues 49–56 are Cytoplasmic-facing; it reads WLDSRLHT. The helical transmembrane segment at 57–78 threads the bilayer; that stretch reads PMYFFLSHLAIIDISYASNNVP. The Extracellular segment spans residues 79 to 100; sequence KMLTNLGLNKRKTISFVPCTMQ. Cysteines 97 and 189 form a disulfide. The chain crosses the membrane as a helical span at residues 101–120; the sequence is TFLYMAFAHTECLILVMMSY. Over 121-139 the chain is Cytoplasmic; that stretch reads DRYMAICHPLQYSVIMRWG. A helical membrane pass occupies residues 140-158; the sequence is VCTVLAVTSWACGSLLALV. Residues 159 to 196 are Extracellular-facing; it reads HVVLILRLPFCGPHEINHFFCEILSVLKLACADTWLNQ. A helical transmembrane segment spans residues 197–219; it reads VVIFAASVFILVGPLCLVLVSYS. Over 220-236 the chain is Cytoplasmic; that stretch reads RILAAILRIQSGEGRRK. The helical transmembrane segment at 237–259 threads the bilayer; sequence AFSTCSSHLCMVGLFFGSAIVMY. At 260-272 the chain is on the extracellular side; it reads MAPKSRHPEEQQK. Residues 273–292 traverse the membrane as a helical segment; that stretch reads VLSLFYSLFNPMLNPLIYSL. Topologically, residues 293–311 are cytoplasmic; the sequence is RNAEVKGALKRVLWKQRSK.

This sequence belongs to the G-protein coupled receptor 1 family.

It is found in the cell membrane. In terms of biological role, odorant receptor. This is Olfactory receptor 2A5 (OR2A5) from Homo sapiens (Human).